Here is a 476-residue protein sequence, read N- to C-terminus: Bifunctional protein GlmU (476 aa).

Positions 1–232 are pyrophosphorylase; that stretch reads MDNLAAIILA…PVEVMGINDR (232 aa). UDP-N-acetyl-alpha-D-glucosamine-binding positions include 9–12, K23, Q75, and 80–81; these read LAAG and GT. D105 is a binding site for Mg(2+). Residues G142, E157, N172, and N230 each contribute to the UDP-N-acetyl-alpha-D-glucosamine site. N230 contributes to the Mg(2+) binding site. Residues 233 to 253 are linker; sequence VQLAEAARHARRRIAEEHMLN. An N-acetyltransferase region spans residues 254 to 476; the sequence is GVTLVDPAAT…EGWKLRKRDQ (223 aa). Positions 353 and 371 each coordinate UDP-N-acetyl-alpha-D-glucosamine. H383 serves as the catalytic Proton acceptor. Y386 and N397 together coordinate UDP-N-acetyl-alpha-D-glucosamine. Residues 406-407, S425, A443, and R460 each bind acetyl-CoA; that span reads NY.

It in the N-terminal section; belongs to the N-acetylglucosamine-1-phosphate uridyltransferase family. The protein in the C-terminal section; belongs to the transferase hexapeptide repeat family. As to quaternary structure, homotrimer. The cofactor is Mg(2+).

It is found in the cytoplasm. It catalyses the reaction alpha-D-glucosamine 1-phosphate + acetyl-CoA = N-acetyl-alpha-D-glucosamine 1-phosphate + CoA + H(+). The catalysed reaction is N-acetyl-alpha-D-glucosamine 1-phosphate + UTP + H(+) = UDP-N-acetyl-alpha-D-glucosamine + diphosphate. Its pathway is nucleotide-sugar biosynthesis; UDP-N-acetyl-alpha-D-glucosamine biosynthesis; N-acetyl-alpha-D-glucosamine 1-phosphate from alpha-D-glucosamine 6-phosphate (route II): step 2/2. It participates in nucleotide-sugar biosynthesis; UDP-N-acetyl-alpha-D-glucosamine biosynthesis; UDP-N-acetyl-alpha-D-glucosamine from N-acetyl-alpha-D-glucosamine 1-phosphate: step 1/1. It functions in the pathway bacterial outer membrane biogenesis; LPS lipid A biosynthesis. Catalyzes the last two sequential reactions in the de novo biosynthetic pathway for UDP-N-acetylglucosamine (UDP-GlcNAc). The C-terminal domain catalyzes the transfer of acetyl group from acetyl coenzyme A to glucosamine-1-phosphate (GlcN-1-P) to produce N-acetylglucosamine-1-phosphate (GlcNAc-1-P), which is converted into UDP-GlcNAc by the transfer of uridine 5-monophosphate (from uridine 5-triphosphate), a reaction catalyzed by the N-terminal domain. The polypeptide is Bifunctional protein GlmU (Geobacter sulfurreducens (strain ATCC 51573 / DSM 12127 / PCA)).